The following is a 115-amino-acid chain: Hydrogenase maturation factor HypA (115 aa).

His2 is a Ni(2+) binding site. Residues Cys73, Cys76, Cys89, and Cys92 each coordinate Zn(2+).

This sequence belongs to the HypA/HybF family.

Involved in the maturation of [NiFe] hydrogenases. Required for nickel insertion into the metal center of the hydrogenase. This is Hydrogenase maturation factor HypA from Shewanella halifaxensis (strain HAW-EB4).